We begin with the raw amino-acid sequence, 148 residues long: Probable 4-amino-4-deoxy-L-arabinose-phosphoundecaprenol flippase subunit ArnF (148 aa).

The Cytoplasmic segment spans residues 1–23 (MRGDNTGVGKEPAVTERPAIKGY). The chain crosses the membrane as a helical span at residues 24–44 (LYVLGSILLVTLAQLAMKWGV). Residues 45-63 (MQLPAWQASLDIMLAHPVP) lie on the Periplasmic side of the membrane. Residues 64 to 84 (LLVITAGVGCYALSLLCWLAA) form a helical membrane-spanning segment. Over 85-91 (LHFTPLN) the chain is Cytoplasmic. Residues 92–112 (IAYPLLSTSYALVYLLAVSIP) form a helical membrane-spanning segment. At 113-117 (SFAEP) the chain is on the periplasmic side. A helical transmembrane segment spans residues 118–138 (LEPGKAVGVIFILLGAVLVGI). Residues 139–148 (KPVGRKRNAH) are Cytoplasmic-facing.

The protein belongs to the ArnF family. In terms of assembly, heterodimer of ArnE and ArnF.

The protein resides in the cell inner membrane. The protein operates within bacterial outer membrane biogenesis; lipopolysaccharide biosynthesis. Functionally, translocates 4-amino-4-deoxy-L-arabinose-phosphoundecaprenol (alpha-L-Ara4N-phosphoundecaprenol) from the cytoplasmic to the periplasmic side of the inner membrane. This chain is Probable 4-amino-4-deoxy-L-arabinose-phosphoundecaprenol flippase subunit ArnF, found in Aeromonas salmonicida (strain A449).